The sequence spans 553 residues: Chaperonin GroEL (553 aa).

ATP-binding positions include 29-32 (TLGP), K50, 86-90 (DGTTT), G424, and D504.

The protein belongs to the chaperonin (HSP60) family. Forms a cylinder of 14 subunits composed of two heptameric rings stacked back-to-back. Interacts with the co-chaperonin GroES.

Its subcellular location is the cytoplasm. It carries out the reaction ATP + H2O + a folded polypeptide = ADP + phosphate + an unfolded polypeptide.. Its function is as follows. Together with its co-chaperonin GroES, plays an essential role in assisting protein folding. The GroEL-GroES system forms a nano-cage that allows encapsulation of the non-native substrate proteins and provides a physical environment optimized to promote and accelerate protein folding. The chain is Chaperonin GroEL from Koribacter versatilis (strain Ellin345).